The following is a 143-amino-acid chain: uncharacterized protein (143 aa).

An HTH cro/C1-type domain is found at 24-78 (IRQRREWQNMSQTTLGEAIGVTFQQVQKYEKGVNRVGAGRLQQISKALKVEPSYF). Residues 35–54 (QTTLGEAIGVTFQQVQKYEK) constitute a DNA-binding region (H-T-H motif).

This is an uncharacterized protein from Sinorhizobium fredii (strain NBRC 101917 / NGR234).